The chain runs to 315 residues: Protoheme IX farnesyltransferase (315 aa).

9 consecutive transmembrane segments (helical) span residues 21-41 (YFAL…LVGL), 52-74 (VGFC…NMWW), 98-118 (GEAL…LALA), 121-141 (LLAA…YSMW), 150-170 (IVIG…AATG), 177-197 (VLMF…LALF), 223-243 (ILVY…TPVA), 246-266 (LYLA…WDIW), and 284-304 (FFKF…AEAI).

Belongs to the UbiA prenyltransferase family. Protoheme IX farnesyltransferase subfamily. Interacts with CtaA.

It is found in the cell inner membrane. The enzyme catalyses heme b + (2E,6E)-farnesyl diphosphate + H2O = Fe(II)-heme o + diphosphate. Its pathway is porphyrin-containing compound metabolism; heme O biosynthesis; heme O from protoheme: step 1/1. In terms of biological role, converts heme B (protoheme IX) to heme O by substitution of the vinyl group on carbon 2 of heme B porphyrin ring with a hydroxyethyl farnesyl side group. The protein is Protoheme IX farnesyltransferase of Dinoroseobacter shibae (strain DSM 16493 / NCIMB 14021 / DFL 12).